Here is a 694-residue protein sequence, read N- to C-terminus: 4-alpha-glucanotransferase (694 aa).

Belongs to the disproportionating enzyme family.

The protein localises to the cytoplasm. It catalyses the reaction Transfers a segment of a (1-&gt;4)-alpha-D-glucan to a new position in an acceptor, which may be glucose or a (1-&gt;4)-alpha-D-glucan.. This Escherichia coli (strain K12) protein is 4-alpha-glucanotransferase (malQ).